Here is a 670-residue protein sequence, read N- to C-terminus: DNA ligase (670 aa).

NAD(+) contacts are provided by residues 32–36, 81–82, and E114; these read DSEYD and SL. K116 functions as the N6-AMP-lysine intermediate in the catalytic mechanism. Positions 137, 174, 291, and 315 each coordinate NAD(+). Zn(2+) is bound by residues C409, C412, C427, and C433. Residues 592-670 form the BRCT domain; it reads ASENLFKDKT…EEEFLAQITR (79 aa).

It belongs to the NAD-dependent DNA ligase family. LigA subfamily. Requires Mg(2+) as cofactor. It depends on Mn(2+) as a cofactor.

It catalyses the reaction NAD(+) + (deoxyribonucleotide)n-3'-hydroxyl + 5'-phospho-(deoxyribonucleotide)m = (deoxyribonucleotide)n+m + AMP + beta-nicotinamide D-nucleotide.. DNA ligase that catalyzes the formation of phosphodiester linkages between 5'-phosphoryl and 3'-hydroxyl groups in double-stranded DNA using NAD as a coenzyme and as the energy source for the reaction. It is essential for DNA replication and repair of damaged DNA. The sequence is that of DNA ligase from Haemophilus influenzae (strain PittGG).